Reading from the N-terminus, the 347-residue chain is Pre-B-cell leukemia transcription factor 1 (347 aa).

The interval 1–37 (MDDQPRLMHSHPGVGMAGHPSLSQHMQDGTGANEGDV) is disordered. The PBC domain maps to 38–232 (GRKQDIGDIL…VMILRSRFLD (195 aa)). The PBC-A stretch occupies residues 45–124 (DILQQIMTIT…EGVAGPEKGG (80 aa)). Positions 127 to 232 (AAAAAAAAAS…VMILRSRFLD (106 aa)) are PBC-B. Positions 233-295 (ARRKRRNFNK…NKRIRYKKNI (63 aa)) form a DNA-binding region, homeobox; TALE-type. The segment covering 318 to 331 (VHGSQANSPSTPSS) has biased composition (polar residues). The interval 318 to 347 (VHGSQANSPSTPSSAGGYPSPCYQSDRRIQ) is disordered.

The protein belongs to the TALE/PBX homeobox family. As to quaternary structure, forms a heterodimer with isoform 2 of meis1; the interaction is necessary for neural fate induction. In terms of tissue distribution, shows broad, weak expression from blastula through gastrula stages. At stage 14/15, expressed in a broad arc that gives rise to the forebrain and eyes. More intensely expressed in the lateral neural folds (presumptive neural crest) and as horizontal stripes in the posterior neural plate that give rise to the hindbrain. As development proceeds, expression progresses posteriorly along the neural folds and at stage 21, expression is pronounced in the prospective hindbrain and in migratory neural crest cells. At later stages (stage 26), expression becomes intense within the dorsal portion of the forebrain, and in the optic cup, caudal branchial arch, peripheral to the pronephric anlage, and in the dorsal anterior half of the spinal cord. Expression remains robust in the hindbrain but gradually becomes more restricted. At stage 28, expressed in the dorsal lateral portion of the neural tube and in the somatic layer of the lateral plate mesoderm that surrounds the pronephric anlage.

It is found in the nucleus. Functionally, acts as a transcriptional activator in complex with isoform 2 of meis1, to induce posterior neural and neural crest gene expression, and thereby specify hindbrain and neural crest cell fate. Binds to a highly conserved region in the promoter of the neural crest gene zic3. Required for the nuclear transport or retention of isoform 2 of meis1. The chain is Pre-B-cell leukemia transcription factor 1 (pbx1) from Xenopus laevis (African clawed frog).